A 351-amino-acid polypeptide reads, in one-letter code: MPVLHNRVSNQELRARMLAESEPRTTVSFYRYFTLSDPQGFRDDLYRTLTALQVFGRVYIAAEGINAQISVLQSRFDAMREALYAAHPQLDGLRLNVALDDDGKSFWVLRMKVRPRIVADGIDDPTFNPANVGHYLKAEEVNALADDPQALFVDMRNHYEYEVGHFDQAIEIPSDTFREQLPMVVEMLQHDKDKKIVMYCTGGIRCEKASAWMRHNGFKNVYHVEGGIIEYARRAREQGLPLKFTGKNFVFDERLGERITPDIIAHCHQCGAPCDSHTNCRNQGCHLLFIQCPVCAEHYVGCCSVTCQEELSLPLSEQRSHRAGRENGMKIFNKSRERLQLSLTGEDSAQK.

The region spanning 146 to 240 (DDPQALFVDM…YARRAREQGL (95 aa)) is the Rhodanese domain. Catalysis depends on cysteine 200, which acts as the Cysteine persulfide intermediate.

It belongs to the TrhO family.

It carries out the reaction uridine(34) in tRNA + AH2 + O2 = 5-hydroxyuridine(34) in tRNA + A + H2O. Catalyzes oxygen-dependent 5-hydroxyuridine (ho5U) modification at position 34 in tRNAs. This is tRNA uridine(34) hydroxylase from Sodalis glossinidius (strain morsitans).